A 408-amino-acid polypeptide reads, in one-letter code: LL-diaminopimelate aminotransferase (408 aa).

Positions 15 and 42 each coordinate substrate. Residues tyrosine 72, 108–109, tyrosine 132, asparagine 187, tyrosine 218, and 246–248 each bind pyridoxal 5'-phosphate; these read SK and SFS. Substrate is bound by residues lysine 109, tyrosine 132, and asparagine 187. Lysine 249 carries the N6-(pyridoxal phosphate)lysine modification. Residues arginine 257 and asparagine 292 each coordinate pyridoxal 5'-phosphate. The substrate site is built by asparagine 292 and arginine 388.

It belongs to the class-I pyridoxal-phosphate-dependent aminotransferase family. LL-diaminopimelate aminotransferase subfamily. In terms of assembly, homodimer. The cofactor is pyridoxal 5'-phosphate.

It catalyses the reaction (2S,6S)-2,6-diaminopimelate + 2-oxoglutarate = (S)-2,3,4,5-tetrahydrodipicolinate + L-glutamate + H2O + H(+). It participates in amino-acid biosynthesis; L-lysine biosynthesis via DAP pathway; LL-2,6-diaminopimelate from (S)-tetrahydrodipicolinate (aminotransferase route): step 1/1. Its function is as follows. Involved in the synthesis of meso-diaminopimelate (m-DAP or DL-DAP), required for both lysine and peptidoglycan biosynthesis. Catalyzes the direct conversion of tetrahydrodipicolinate to LL-diaminopimelate. The polypeptide is LL-diaminopimelate aminotransferase (Prochlorococcus marinus (strain MIT 9515)).